We begin with the raw amino-acid sequence, 472 residues long: MLHAMRPVLLVAALLAVTAHAFLGFGSGSTHKDDAEWGHYHNQAQLEAKLGEINEKCPEITTLYEIGQSVEGRPLVVIQFSTTPGEHIPTKPEVKLIGNMHGNEPIGRELLLRFAETLCNGAINNDKEIVQLLNSTSIHILPSMNPDGFELALGTEPAQRQWLTGRSNINGVDLNRDFPDLDSIFYELQKIGVPKFDHLLSLFEDNVDRQPETIAVGQWTLSLPFVLSANFHEGDLVANYPFDAAIDENSQKTAYSASPDDGTFRWLAKSYADNHAHMSKNDHAPCDGTSQDAFARQGGITNGAKWYSVAGGMQDFNYLATNAMEITLELSCEKMPEGSQLPRFWEDNQKSIFEYVWKSHSGVKGMVVDAMTGEPIKRAVVWIRNGTETVPVKHPVTTWSEGDFYRVLPAGKYEIIVAAEGYDIAAKNVTVENKVRDSALVVNFALSPAADEPSENEQEQIAELVNEIARRR.

A signal peptide spans 1 to 21 (MLHAMRPVLLVAALLAVTAHA). Residues 39–359 (HYHNQAQLEA…KSIFEYVWKS (321 aa)) form the Peptidase M14 domain. Zn(2+) contacts are provided by histidine 101 and glutamate 104. An N-linked (GlcNAc...) asparagine glycan is attached at asparagine 134. Histidine 232 is a Zn(2+) binding site. The active-site Proton donor/acceptor is glutamate 329. Asparagine 385 and asparagine 428 each carry an N-linked (GlcNAc...) asparagine glycan.

The protein belongs to the peptidase M14 family. The cofactor is Zn(2+). In terms of tissue distribution, expression is restricted to the nervous system.

The protein resides in the cell projection. It is found in the axon. It localises to the perikaryon. Its subcellular location is the cytoplasmic vesicle. The protein localises to the secretory vesicle lumen. It carries out the reaction Release of C-terminal arginine or lysine residues from polypeptides.. In terms of biological role, during FMRFamide-like peptide (FaRPs or FLP) and neuropeptide-like protein (NLP) precursor processing, catalyzes the removal of Arg or Lys residues from the C-terminus following the initial endoprotease cleavage. By processing neuropeptides, modulates basal acetylcholine release at the ventral cord neuromuscular junctions. Involved in egg-laying, defecation and locomotion. By processing FLP neuropeptides, regulates the turning step of male mating behavior. Involved in reducing pharyngeal pumping in response to high CO(2) levels. In Caenorhabditis elegans, this protein is Carboxypeptidase E.